A 459-amino-acid polypeptide reads, in one-letter code: MAVSLWQQCIGRLQDELSAQQFSMWIRPLQAEMDGETLVLYAPNRFVLDWVRDKYLNTINQFFTEQMGSDAPKLRFDIGSRPASKPAAPAASTKSPVAPAAKSPSKPSFNSNEPAATANHRSNMNPTYQFDNFVEGKSNQLGKAAALQVSENPGGAYNPLFLYGGTGLGKTHLLHAVGNGIIKNNPNAKVVYMHSERFVQDMVKALQNNAIEEFKRYYRSVDALFIDDIQFFANKDRSQEEFFHTFNALLEGNHQVILTSDRYPKEIDGVEDRLKSRFGWGLTVAIEPPELETRVAILMRKAQESGINLPDEVAFFIAKRLRSNVRELEGALNRVIANANFTGRPITIDFVREALRDLLALQEKLVTIDNIQKTVAEYYKIKMADMLSKRRSRSVARPRQMAMALSKELTNQSLPEIGDAFGGRDHTTVLHACRKIAQLREESHDIKEDYANLIRTLSS.

The segment at 1–90 (MAVSLWQQCI…RPASKPAAPA (90 aa)) is domain I, interacts with DnaA modulators. The tract at residues 75–124 (RFDIGSRPASKPAAPAASTKSPVAPAAKSPSKPSFNSNEPAATANHRSNM) is disordered. A compositionally biased stretch (low complexity) spans 80-108 (SRPASKPAAPAASTKSPVAPAAKSPSKPS). Positions 91–122 (ASTKSPVAPAAKSPSKPSFNSNEPAATANHRS) are domain II. A compositionally biased stretch (polar residues) spans 109–124 (FNSNEPAATANHRSNM). The tract at residues 123–339 (NMNPTYQFDN…GALNRVIANA (217 aa)) is domain III, AAA+ region. 4 residues coordinate ATP: Gly167, Gly169, Lys170, and Thr171. The tract at residues 340 to 459 (NFTGRPITID…YANLIRTLSS (120 aa)) is domain IV, binds dsDNA.

Belongs to the DnaA family. Oligomerizes as a right-handed, spiral filament on DNA at oriC.

It is found in the cytoplasm. In terms of biological role, plays an essential role in the initiation and regulation of chromosomal replication. ATP-DnaA binds to the origin of replication (oriC) to initiate formation of the DNA replication initiation complex once per cell cycle. Binds the DnaA box (a 9 base pair repeat at the origin) and separates the double-stranded (ds)DNA. Forms a right-handed helical filament on oriC DNA; dsDNA binds to the exterior of the filament while single-stranded (ss)DNA is stabiized in the filament's interior. The ATP-DnaA-oriC complex binds and stabilizes one strand of the AT-rich DNA unwinding element (DUE), permitting loading of DNA polymerase. After initiation quickly degrades to an ADP-DnaA complex that is not apt for DNA replication. Binds acidic phospholipids. In Shewanella loihica (strain ATCC BAA-1088 / PV-4), this protein is Chromosomal replication initiator protein DnaA.